The sequence spans 62 residues: Large ribosomal subunit protein eL37 (62 aa).

Residues C20, C23, C35, and C38 each contribute to the Zn(2+) site. Residues 20–38 (CRRCGRKAFNVKKGYCAAC) form a C4-type zinc finger.

The protein belongs to the eukaryotic ribosomal protein eL37 family. The cofactor is Zn(2+).

Its function is as follows. Binds to the 23S rRNA. The sequence is that of Large ribosomal subunit protein eL37 (rpl37e) from Pyrococcus abyssi (strain GE5 / Orsay).